A 181-amino-acid polypeptide reads, in one-letter code: MAGNDSNLIWLDLEMTGLEPVEDVILEIAIIITDSELNILAQGPIFAISQTDDVLDNMNPWCIEHHGKSGLTQRCRDSEVSLAHATKESLAFVQEWVPQGKSPMCGNSIGQDRRFINKYMPDFEDHFHYRNLDVSTIKELAKRWKPEVLESVVKTGAHLALDDIKESIAELKVYRELFFKL.

In terms of domain architecture, Exonuclease spans 8–171; it reads LIWLDLEMTG…DDIKESIAEL (164 aa). Y129 is a catalytic residue.

The protein belongs to the oligoribonuclease family.

The protein localises to the cytoplasm. 3'-to-5' exoribonuclease specific for small oligoribonucleotides. This is Oligoribonuclease from Colwellia psychrerythraea (strain 34H / ATCC BAA-681) (Vibrio psychroerythus).